Consider the following 120-residue polypeptide: MAGVKAYELRTKSKEQLASQLVDLKKELAELKVQKLSRPSLPKIKTVRKSIACVLTVINEQQREAVRQLYKGKKYQPKDLRAKKTRALRRALTKFEASQVTEKQRKKQIAFPQRKYAIKA.

2 positions are modified to phosphoserine: serine 13 and serine 50.

It belongs to the universal ribosomal protein uL29 family. Component of the large ribosomal subunit (LSU). Mature yeast ribosomes consist of a small (40S) and a large (60S) subunit. The 40S small subunit contains 1 molecule of ribosomal RNA (18S rRNA) and 33 different proteins (encoded by 57 genes). The large 60S subunit contains 3 rRNA molecules (25S, 5.8S and 5S rRNA) and 46 different proteins (encoded by 81 genes). uL29 is associated with the polypeptide exit tunnel.

The protein localises to the cytoplasm. Functionally, component of the ribosome, a large ribonucleoprotein complex responsible for the synthesis of proteins in the cell. The small ribosomal subunit (SSU) binds messenger RNAs (mRNAs) and translates the encoded message by selecting cognate aminoacyl-transfer RNA (tRNA) molecules. The large subunit (LSU) contains the ribosomal catalytic site termed the peptidyl transferase center (PTC), which catalyzes the formation of peptide bonds, thereby polymerizing the amino acids delivered by tRNAs into a polypeptide chain. The nascent polypeptides leave the ribosome through a tunnel in the LSU and interact with protein factors that function in enzymatic processing, targeting, and the membrane insertion of nascent chains at the exit of the ribosomal tunnel. This is Large ribosomal subunit protein uL29A from Saccharomyces cerevisiae (strain ATCC 204508 / S288c) (Baker's yeast).